A 1154-amino-acid polypeptide reads, in one-letter code: Voltage-gated inwardly rectifying potassium channel KCNH2 (1154 aa).

The Cytoplasmic portion of the chain corresponds to Met-1–Tyr-403. Residues Val-41–His-70 form the PAS domain. In terms of domain architecture, PAC spans Arg-92–Asp-144. The tract at residues Ala-233–Arg-312 is disordered. The residue at position 239 (Ser-239) is a Phosphoserine. Over residues Pro-258–Arg-269 the composition is skewed to polar residues. A phosphoserine mark is found at Ser-283, Ser-284, Ser-320, and Ser-351. The chain crosses the membrane as a helical span at residues Ser-404–Phe-424. Over Thr-425–Gln-450 the chain is Extracellular. The helical transmembrane segment at Pro-451–Phe-471 threads the bilayer. The Cytoplasmic portion of the chain corresponds to Arg-472 to Lys-495. The helical transmembrane segment at Gly-496–Gly-516 threads the bilayer. Topologically, residues Ser-517 to Leu-520 are extracellular. The chain crosses the membrane as a helical; Voltage-sensor span at residues Ile-521–Arg-541. At Tyr-542 to Ala-547 the chain is on the cytoplasmic side. A helical membrane pass occupies residues Ala-548 to Trp-568. Residues Tyr-569–Tyr-611 are Extracellular-facing. Residues Val-612 to Pro-632 constitute an intramembrane region (pore-forming). The Selectivity filter signature appears at Ser-624–Asn-629. The Extracellular segment spans residues Asn-633–Lys-638. A helical membrane pass occupies residues Ile-639–Val-659. The Cytoplasmic portion of the chain corresponds to Ser-660 to Ser-1154. The segment at Pro-742–Leu-842 is cNMP-binding domain. Positions Gly-870–Asn-985 are disordered. Residues Ser-871 and Ser-874 each carry the phosphoserine modification. A compositionally biased stretch (basic residues) spans Arg-883 to Arg-892. Over residues Gly-916 to Trp-927 the composition is skewed to gly residues. The segment covering Gly-928 to Glu-939 has biased composition (low complexity). Omega-N-methylarginine is present on Arg-1014. Residues Arg-1037–Thr-1064 adopt a coiled-coil conformation. Residues Asp-1125–Ser-1154 form a disordered region. At Ser-1132 the chain carries Phosphoserine.

This sequence belongs to the potassium channel family. H (Eag) (TC 1.A.1.20) subfamily. Kv11.1/KCNH2 sub-subfamily. In terms of assembly, the potassium channel is probably composed of a homo- or heterotetrameric complex of pore-forming alpha subunits that can associate with modulating beta subunits. Interacts with DNAJB12 and DNAJB14; chaperones DNAJB12 and DNAJB14 promote tetramerization. Heteromultimer with KCNH6/ERG2 and KCNH7/ERG3. Interacts with ALG10B. Forms a stable complex with KCNE1 or KCNE2, and that this heteromultimerization regulates Inward rectifier potassium channel activity. Interacts with CANX. The core-glycosylated, but not the fully glycosylated form interacts with RNF207. Interacts with NDFIP1 and NDFIP2; this interaction decreases the cell membrane expression by targeting KCNH2, through interaction with NEDD4L, for the degradation through the multivesicular bodies (MVBs)-lysosomal pathway. Phosphorylated on serine and threonine residues. Phosphorylation by PKA inhibits ion conduction.

The protein resides in the cell membrane. It carries out the reaction K(+)(in) = K(+)(out). Pore-forming (alpha) subunit of voltage-gated inwardly rectifying potassium channel. Characterized by unusual gating kinetics by producing relatively small outward currents during membrane depolarization and large inward currents during subsequent repolarization which reflect a rapid inactivation during depolarization and quick recovery from inactivation but slow deactivation (closing) during repolarization. Channel properties are modulated by cAMP and subunit assembly. Forms a stable complex with KCNE1 or KCNE2, and that this heteromultimerization regulates inward rectifier potassium channel activity. This is Voltage-gated inwardly rectifying potassium channel KCNH2 from Sus scrofa (Pig).